The sequence spans 267 residues: Adenosine 5'-phosphosulfate reductase (267 aa).

A disordered region spans residues 1 to 29 (MPPFATIPATERNSAAQHQDPSPMSQPFD). Polar residues predominate over residues 11-25 (ERNSAAQHQDPSPMS). The [4Fe-4S] cluster site is built by cysteine 139, cysteine 140, cysteine 228, and cysteine 231. Cysteine 256 acts as the Nucleophile; cysteine thiosulfonate intermediate in catalysis.

This sequence belongs to the PAPS reductase family. CysH subfamily. [4Fe-4S] cluster serves as cofactor.

The protein localises to the cytoplasm. The catalysed reaction is [thioredoxin]-disulfide + sulfite + AMP + 2 H(+) = adenosine 5'-phosphosulfate + [thioredoxin]-dithiol. Its pathway is sulfur metabolism; hydrogen sulfide biosynthesis; sulfite from sulfate. In terms of biological role, catalyzes the formation of sulfite from adenosine 5'-phosphosulfate (APS) using thioredoxin as an electron donor. The sequence is that of Adenosine 5'-phosphosulfate reductase from Pseudomonas aeruginosa (strain LESB58).